A 446-amino-acid polypeptide reads, in one-letter code: ATP synthase subunit b-delta (446 aa).

Residues 1–168 are ATP synthase subunit b; that stretch reads MSTFIGQLVG…PKGADVEYPL (168 aa). Residues 4-24 form a helical membrane-spanning segment; it reads FIGQLVGFAAIVYLVWWYVVP. The tract at residues 169–446 is ATP synthase subunit delta; that stretch reads LAKMRSASRR…LVAAEAALPD (278 aa).

In the N-terminal section; belongs to the ATPase B chain family. It in the C-terminal section; belongs to the ATPase delta chain family. F-type ATPases have 2 components, F(1) - the catalytic core - and F(0) - the membrane proton channel. F(1) has five subunits: alpha(3), beta(3), gamma(1), delta(1), epsilon(1). F(0) has three main subunits: a(1), b(2) and c(10-14). The alpha and beta chains form an alternating ring which encloses part of the gamma chain. F(1) is attached to F(0) by a central stalk formed by the gamma and epsilon chains, while a peripheral stalk is formed by the delta and b chains.

Its subcellular location is the cell membrane. Its function is as follows. F(1)F(0) ATP synthase produces ATP from ADP in the presence of a proton or sodium gradient. F-type ATPases consist of two structural domains, F(1) containing the extramembraneous catalytic core and F(0) containing the membrane proton channel, linked together by a central stalk and a peripheral stalk. During catalysis, ATP synthesis in the catalytic domain of F(1) is coupled via a rotary mechanism of the central stalk subunits to proton translocation. Functionally, this fusion protein includes a component of the F(0) channel (subunit b) and of the F(1) subunit (subunit delta). Two copies of subunit b and one of delta together form the peripheral 'stator' stalk which links F(1) to F(0). The chain is ATP synthase subunit b-delta (atpFH) from Mycobacterium leprae (strain Br4923).